The sequence spans 56 residues: Large ribosomal subunit protein bL33 (56 aa).

The protein belongs to the bacterial ribosomal protein bL33 family.

This is Large ribosomal subunit protein bL33 from Delftia acidovorans (strain DSM 14801 / SPH-1).